The following is a 234-amino-acid chain: MMKSFLLVVNIVALTLPFLAAEVQNQEQPACCGNDERLFEQKKVLYLLSYPVLNNYLRTAPSYYQNRASVPINNPYLCHLYYVPSFVLWAQGQIPKGPVSTDIHQSTMQYHQAKHPSFMAILSKKILGKATILSTDAIAAPEQTPVSAAQPTVSAGDTPEVSSQFIDTPDTSVLAEEARESPEDTPEISEFINAPDTAVPSEEPRESAEDTPEISSEFIFSPETSTGPAIASMA.

A signal peptide spans 1–21 (MMKSFLLVVNIVALTLPFLAA). 3 repeat units span residues 127-153 (LGKA…QPTV), 154-179 (SAGD…EEAR), and 180-207 (ESPE…PRES). The interval 127–207 (LGKATILSTD…AVPSEEPRES (81 aa)) is 3 X 27 AA tandem repeats. The disordered stretch occupies residues 143-234 (QTPVSAAQPT…STGPAIASMA (92 aa)). O-linked (GalNAc...) threonine glycosylation occurs at threonine 144. The segment covering 144 to 171 (TPVSAAQPTVSAGDTPEVSSQFIDTPDT) has biased composition (polar residues). Position 158 is a phosphothreonine (threonine 158). Residue serine 162 is modified to Phosphoserine; alternate. The O-linked (GalNAc...) serine; alternate glycan is linked to serine 162.

Belongs to the kappa-casein family. As to expression, mammary gland specific. Secreted in milk.

It is found in the secreted. Kappa-casein stabilizes micelle formation, preventing casein precipitation in milk. The protein is Kappa-casein (CSN3) of Cavia porcellus (Guinea pig).